The chain runs to 222 residues: ATP-dependent dethiobiotin synthetase BioD 2 (222 aa).

Residue Thr17 coordinates Mg(2+). Lys38 is a catalytic residue. Substrate is bound at residue Thr42. Mg(2+) contacts are provided by Asp55 and Glu112. ATP-binding positions include Asp55, 112–115 (EGCG), 172–173 (NR), 201–203 (PYL), and Glu208.

This sequence belongs to the dethiobiotin synthetase family. Homodimer. The cofactor is Mg(2+).

It localises to the cytoplasm. The catalysed reaction is (7R,8S)-7,8-diammoniononanoate + CO2 + ATP = (4R,5S)-dethiobiotin + ADP + phosphate + 3 H(+). It functions in the pathway cofactor biosynthesis; biotin biosynthesis; biotin from 7,8-diaminononanoate: step 1/2. Its function is as follows. Catalyzes a mechanistically unusual reaction, the ATP-dependent insertion of CO2 between the N7 and N8 nitrogen atoms of 7,8-diaminopelargonic acid (DAPA, also called 7,8-diammoniononanoate) to form a ureido ring. The sequence is that of ATP-dependent dethiobiotin synthetase BioD 2 from Yersinia pestis.